Here is a 154-residue protein sequence, read N- to C-terminus: Prefoldin subunit alpha (154 aa).

Belongs to the prefoldin alpha subunit family. Heterohexamer of two alpha and four beta subunits.

It is found in the cytoplasm. In terms of biological role, molecular chaperone capable of stabilizing a range of proteins. Seems to fulfill an ATP-independent, HSP70-like function in archaeal de novo protein folding. This Hyperthermus butylicus (strain DSM 5456 / JCM 9403 / PLM1-5) protein is Prefoldin subunit alpha.